A 380-amino-acid polypeptide reads, in one-letter code: Kappa-type opioid receptor (380 aa).

At 1–57 (MDSPIQIFRGEPGPTCAPSACLPPNSSAWFPGWAEPDSNGSAGSEDAQLEPAHISPA) the chain is on the extracellular side. N-linked (GlcNAc...) asparagine glycans are attached at residues asparagine 25 and asparagine 39. Residues 58–85 (IPVIITAVYSVVFVVGLVGNSLVMFVII) form a helical membrane-spanning segment. Over 86 to 95 (RYTKMKTATN) the chain is Cytoplasmic. A helical membrane pass occupies residues 96 to 119 (IYIFNLALADALVTTTMPFQSTVY). Topologically, residues 120–132 (LMNSWPFGDVLCK) are extracellular. An intrachain disulfide couples cysteine 131 to cysteine 210. The chain crosses the membrane as a helical span at residues 133–154 (IVISIDYYNMFTSIFTLTMMSV). At 155–173 (DRYIAVCHPVKALDFRTPL) the chain is on the cytoplasmic side. A helical membrane pass occupies residues 174-196 (KAKIINICIWLLSSSVGISAIVL). Topologically, residues 197 to 222 (GGTKVREDVDVIECSLQFPDDDYSWW) are extracellular. A helical membrane pass occupies residues 223–247 (DLFMKICVFIFAFVIPVLIIIVCYT). The Cytoplasmic portion of the chain corresponds to 248–274 (LMILRLKSVRLLSGSREKDRNLRRITR). The chain crosses the membrane as a helical span at residues 275–296 (LVLVVVAVFVVCWTPIHIFILV). Over 297–311 (EALGSTSHSTAALSS) the chain is Extracellular. Residues 312-333 (YYFCIALGYTNSSLNPILYAFL) traverse the membrane as a helical segment. Residues 334–380 (DENFKRCFRDFCFPLKMRMERQSTSRVRNTVQDPAYLRDIDGMNKPV) are Cytoplasmic-facing. The S-palmitoyl cysteine moiety is linked to residue cysteine 345.

It belongs to the G-protein coupled receptor 1 family. In terms of assembly, interacts with NHERF1. Interacts with GABARAPL1. As to expression, detected in brain and placenta.

The protein resides in the cell membrane. G-protein coupled opioid receptor that functions as a receptor for endogenous alpha-neoendorphins and dynorphins, but has low affinity for beta-endorphins. Also functions as a receptor for various synthetic opioids and for the psychoactive diterpene salvinorin A. Ligand binding causes a conformation change that triggers signaling via guanine nucleotide-binding proteins (G proteins) and modulates the activity of down-stream effectors, such as adenylate cyclase. Signaling leads to the inhibition of adenylate cyclase activity. Inhibits neurotransmitter release by reducing calcium ion currents and increasing potassium ion conductance. Plays a role in the perception of pain. Plays a role in mediating reduced physical activity upon treatment with synthetic opioids. Plays a role in the regulation of salivation in response to synthetic opioids. May play a role in arousal and regulation of autonomic and neuroendocrine functions. This is Kappa-type opioid receptor (OPRK1) from Homo sapiens (Human).